Here is a 192-residue protein sequence, read N- to C-terminus: Adenylate kinase (192 aa).

12–17 (GSGKTT) is an ATP binding site. The interval 34–63 (STGDLLRAEVASGSELGKTIDSFISKGNLV) is NMP. Residues T35, R40, 61 to 63 (NLV), 88 to 91 (GYPR), and Q95 contribute to the AMP site. The segment at 130 to 136 (GRNRGAD) is LID. Position 131 (R131) interacts with ATP. AMP-binding residues include R133 and R145. Residue R173 coordinates ATP.

The protein belongs to the adenylate kinase family. Monomer.

Its subcellular location is the cytoplasm. The enzyme catalyses AMP + ATP = 2 ADP. The protein operates within purine metabolism; AMP biosynthesis via salvage pathway; AMP from ADP: step 1/1. Functionally, catalyzes the reversible transfer of the terminal phosphate group between ATP and AMP. Plays an important role in cellular energy homeostasis and in adenine nucleotide metabolism. This chain is Adenylate kinase, found in Campylobacter jejuni subsp. jejuni serotype O:6 (strain 81116 / NCTC 11828).